The following is a 332-amino-acid chain: MTNSTLPPAQLHHLPASSIKSGAVNGAAADPVGTNEKFLQILRAPIDYLLTIPGKDVRGKMMNAFNQWLQIPEEKLDIIKEVIKLLHTASLLIDDIQDNSRLRRGLPVAHSIFGVAQTINTANYAYFLAQQELNKLDCAAAYEVFTEELLRLHQGQGMDIYWRDSSLCPTEEEYFEMVGNKTGGLFRLAVRLMQLASNKDCDFVPFVNVLGILFQIRDDYLNLQSDLYTKNKGFGEDLTEGKFSFPIIHSIRADPASITLTSILKQRTEDEDVKRYAISYIESTGSFEHCRRKIDELVGEARMCVKDMSPEDAKVADGIMAMVGLGAGGLSI.

Lys-55, Arg-58, and His-87 together coordinate isopentenyl diphosphate. Residues Asp-94 and Asp-98 each coordinate Mg(2+). Residue Arg-103 coordinates dimethylallyl diphosphate. Arg-104 serves as a coordination point for isopentenyl diphosphate. 3 residues coordinate dimethylallyl diphosphate: Lys-181, Thr-182, and Gln-215. Position 218 (Asp-218) interacts with Mg(2+). The dimethylallyl diphosphate site is built by Asn-222, Lys-232, and Lys-242.

Belongs to the FPP/GGPP synthase family. The cofactor is Mg(2+).

The enzyme catalyses isopentenyl diphosphate + dimethylallyl diphosphate = (2E)-geranyl diphosphate + diphosphate. It carries out the reaction isopentenyl diphosphate + (2E)-geranyl diphosphate = (2E,6E)-farnesyl diphosphate + diphosphate. The catalysed reaction is isopentenyl diphosphate + (2E,6E)-farnesyl diphosphate = (2E,6E,10E)-geranylgeranyl diphosphate + diphosphate. It participates in secondary metabolite biosynthesis; terpenoid biosynthesis. Geranylgeranyl pyrophosphate synthase; part of the gene cluster that mediates the biosynthesis of the diterpenoid pyrones subglutinols A and B. The first step of the pathway is the synthesis of the alpha-pyrone moiety by the polyketide synthase dpasA via condensation of one acetyl-CoA starter unit with 3 malonyl-CoA units and 2 methylations. The alpha-pyrone is then combined with geranylgeranyl pyrophosphate (GGPP) formed by the GGPP synthase dpasD through the action of the prenyltransferase dpasC to yield a linear alpha-pyrone diterpenoid. Subsequent steps in the diterpenoid pyrone biosynthetic pathway involve the decalin core formation, which is initiated by the epoxidation of the C10-C11 olefin by the FAD-dependent oxidoreductase dpasE, and is followed by a cyclization cascade catalyzed by the terpene cyclase dpasB. The FAD-linked oxidoreductase dpasF is then involved in tetrahydrofuran (THF) ring formation at the C5 unit to complete the formation of subglutinols A and B. DpasF also possesses an additional catalytic ability of multi-step oxidations to generate a new DDP analog with an enone system at the C5 named FDDP A. The protein is Geranylgeranyl pyrophosphate synthase dpasD of Apiospora sacchari (Arthrinium sacchari).